We begin with the raw amino-acid sequence, 1619 residues long: ATP-dependent helicase ULS1 (1619 aa).

An SUMO interacting motif; type a 1 motif is present at residues 7 to 10 (IDLT). Positions 86–102 (STFNNEKSSNEVKQQQV) are enriched in polar residues. 4 disordered regions span residues 86–123 (STFNNEKSSNEVKQQQVLKEETMGSSNDEKKTQESSPS), 200–279 (NNKP…VESS), 347–371 (PILPSKNMDHTTHNSHDSEQKNSSI), and 429–450 (SGSNSIPTSETDAQSSSSSVLQ). Positions 103–118 (LKEETMGSSNDEKKTQ) are enriched in basic and acidic residues. The residue at position 121 (serine 121) is a Phosphoserine. The span at 200 to 210 (NNKPSQQQFSD) shows a compositional bias: polar residues. Over residues 211 to 226 (PETKDNSLKSENKDQI) the composition is skewed to basic and acidic residues. Polar residues-rich tracts occupy residues 242–259 (SAFQDSETQNNSKNTIPN) and 269–279 (LPSNLSSVESS). Residues 353 to 366 (NMDHTTHNSHDSEQ) show a composition bias toward basic and acidic residues. The short motif at 371-378 (IIILSDED) is the SUMO interacting motif; type b 1 element. Positions 470–473 (LDTL) match the SUMO interacting motif; type a 2 motif. The short motif at 543-550 (ILVDEAEN) is the SUMO interacting motif; type b 2 element. Positions 956–1157 (QVENSAKKGG…YSLIRFLRIP (202 aa)) constitute a Helicase ATP-binding domain. 969-976 (DDMGLGKT) serves as a coordination point for ATP. The RING-type zinc finger occupies 1330–1386 (CFWCMEQLEPEAMSVLTGCGHLICDTCIEPFIEESSMLPQAKKTKGGAFAIPCKDCQ). A Helicase C-terminal domain is found at 1447–1606 (QCIQVIQRVF…GKIKEVNSLG (160 aa)).

This sequence belongs to the SNF2/RAD54 helicase family. As to quaternary structure, interacts with CDC3, CDC11, EBP2, SIR4, UBC4 and SUMO/SMT3.

The protein localises to the nucleus. In terms of biological role, ATP-dependent helicase involved mating type switching and in silencing interference through its interaction with the silencing regulator SIR4. Cooperates with UBC4 and UBC5 to mediate ubiquitination of SUMO conjugates. The polypeptide is ATP-dependent helicase ULS1 (ULS1) (Saccharomyces cerevisiae (strain ATCC 204508 / S288c) (Baker's yeast)).